Consider the following 289-residue polypeptide: tRNA pseudouridine synthase B (289 aa).

Asp55 serves as the catalytic Nucleophile. A disordered region spans residues Pro243 to Arg289. Positions Ala265–Arg289 are enriched in basic and acidic residues.

Belongs to the pseudouridine synthase TruB family. Type 1 subfamily.

The enzyme catalyses uridine(55) in tRNA = pseudouridine(55) in tRNA. Functionally, responsible for synthesis of pseudouridine from uracil-55 in the psi GC loop of transfer RNAs. The chain is tRNA pseudouridine synthase B from Chlorobium luteolum (strain DSM 273 / BCRC 81028 / 2530) (Pelodictyon luteolum).